We begin with the raw amino-acid sequence, 152 residues long: MFDILVYLFENYYTPQACPAADVLAKRLAAAGFEHEDIDDALGWLYGLAETTERCVDLAQAPSSGIRIYTDSEYQQLGTESIGFIAFLESAGVLPAPLREIVIDRALAAPETPVSLAKTKIIALMVLWSQEAEIDNLVLEELLDDDGARRLH.

The protein belongs to the Smg family.

The chain is Protein Smg homolog from Bordetella petrii (strain ATCC BAA-461 / DSM 12804 / CCUG 43448).